A 269-amino-acid chain; its full sequence is Expansin-A32 (269 aa).

The N-terminal stretch at 1–25 (MWCTWALGRVVLAVVFLVALAAGDA) is a signal peptide. An Expansin-like EG45 domain is found at 60-174 (DGACGYKDTS…RRVPCVKVGG (115 aa)). In terms of domain architecture, Expansin-like CBD spans 184–264 (YFNLVMVSNV…DWQFGVTYQA (81 aa)).

The protein belongs to the expansin family. Expansin A subfamily.

The protein localises to the secreted. Its subcellular location is the cell wall. It is found in the membrane. May cause loosening and extension of plant cell walls by disrupting non-covalent bonding between cellulose microfibrils and matrix glucans. No enzymatic activity has been found. May be required for rapid internodal elongation in deepwater rice during submergence. This is Expansin-A32 (EXPA32) from Oryza sativa subsp. japonica (Rice).